The sequence spans 365 residues: uncharacterized protein (365 aa).

29–36 (GPLNSGKS) contacts ATP.

Belongs to the archaeal ATPase family.

This is an uncharacterized protein from Methanocaldococcus jannaschii (strain ATCC 43067 / DSM 2661 / JAL-1 / JCM 10045 / NBRC 100440) (Methanococcus jannaschii).